We begin with the raw amino-acid sequence, 166 residues long: Phosphopantetheine adenylyltransferase (166 aa).

Residue serine 11 participates in substrate binding. Residues 11 to 12 (SF) and histidine 19 contribute to the ATP site. Residues lysine 43, alanine 76, and arginine 90 each contribute to the substrate site. ATP is bound by residues 91–93 (GLR), glutamate 101, and 126–132 (LQPISSS).

The protein belongs to the bacterial CoaD family. As to quaternary structure, homohexamer. The cofactor is Mg(2+).

The protein resides in the cytoplasm. The catalysed reaction is (R)-4'-phosphopantetheine + ATP + H(+) = 3'-dephospho-CoA + diphosphate. Its pathway is cofactor biosynthesis; coenzyme A biosynthesis; CoA from (R)-pantothenate: step 4/5. Its function is as follows. Reversibly transfers an adenylyl group from ATP to 4'-phosphopantetheine, yielding dephospho-CoA (dPCoA) and pyrophosphate. In Streptococcus equi subsp. zooepidemicus (strain H70), this protein is Phosphopantetheine adenylyltransferase.